An 85-amino-acid polypeptide reads, in one-letter code: RNA-binding protein Hfq (85 aa).

Residues 9-68 (DPFLNALRRERIPVSIYLVNGIKLQGQIESFDQFVVLLKNTVSQMVYKHAISTVVPARIP) enclose the Sm domain.

It belongs to the Hfq family. In terms of assembly, homohexamer.

Its function is as follows. RNA chaperone that binds small regulatory RNA (sRNAs) and mRNAs to facilitate mRNA translational regulation in response to envelope stress, environmental stress and changes in metabolite concentrations. Also binds with high specificity to tRNAs. This is RNA-binding protein Hfq from Idiomarina loihiensis (strain ATCC BAA-735 / DSM 15497 / L2-TR).